The primary structure comprises 491 residues: Chromosomal replication initiator protein DnaA (491 aa).

A domain I, interacts with DnaA modulators region spans residues 1–69 (MTTWDKCLKK…TIQECHGNDL (69 aa)). The interval 69–154 (LIIEYSNKKF…KEDEEYSFGL (86 aa)) is domain II. Positions 155-371 (PLKEKYVFDS…GALNRVLTTS (217 aa)) are domain III, AAA+ region. The ATP site is built by Gly199, Gly201, Lys202, and Thr203. A domain IV, binds dsDNA region spans residues 372 to 491 (KFNHKDPTIE…YELLLNKISR (120 aa)).

Belongs to the DnaA family. As to quaternary structure, oligomerizes as a right-handed, spiral filament on DNA at oriC.

It is found in the cytoplasm. In terms of biological role, plays an essential role in the initiation and regulation of chromosomal replication. ATP-DnaA binds to the origin of replication (oriC) to initiate formation of the DNA replication initiation complex once per cell cycle. Binds the DnaA box (a 9 base pair repeat at the origin) and separates the double-stranded (ds)DNA. Forms a right-handed helical filament on oriC DNA; dsDNA binds to the exterior of the filament while single-stranded (ss)DNA is stabiized in the filament's interior. The ATP-DnaA-oriC complex binds and stabilizes one strand of the AT-rich DNA unwinding element (DUE), permitting loading of DNA polymerase. After initiation quickly degrades to an ADP-DnaA complex that is not apt for DNA replication. Binds acidic phospholipids. The polypeptide is Chromosomal replication initiator protein DnaA (Francisella tularensis subsp. tularensis (strain WY96-3418)).